Consider the following 719-residue polypeptide: Polyphosphate kinase (719 aa).

N47 is a binding site for ATP. Mg(2+) contacts are provided by R377 and R407. Residue H437 is the Phosphohistidine intermediate of the active site. Y470, R566, and H594 together coordinate ATP.

It belongs to the polyphosphate kinase 1 (PPK1) family. The cofactor is Mg(2+). In terms of processing, an intermediate of this reaction is the autophosphorylated ppk in which a phosphate is covalently linked to a histidine residue through a N-P bond.

The enzyme catalyses [phosphate](n) + ATP = [phosphate](n+1) + ADP. Its function is as follows. Catalyzes the reversible transfer of the terminal phosphate of ATP to form a long-chain polyphosphate (polyP). This chain is Polyphosphate kinase, found in Exiguobacterium sibiricum (strain DSM 17290 / CCUG 55495 / CIP 109462 / JCM 13490 / 255-15).